We begin with the raw amino-acid sequence, 107 residues long: Putative ankyrin repeat protein L14 (107 aa).

ANK repeat units lie at residues 19-48 (DNNYVVRPTSIKVYIEVVKYLVSQGANIRA), 49-78 (DNDCAVRFASRNGHLEVVKYLVSLGANIRA), and 80-107 (NDCAVRWASRNGHLDVVEYLVSLGAVLS).

The protein is Putative ankyrin repeat protein L14 of Acanthamoeba polyphaga (Amoeba).